A 245-amino-acid polypeptide reads, in one-letter code: Photosystem II protein PSBS2 (245 aa).

The N-terminal 25 residues, 1–25 (MAMTLSTKAFAQRGVSARKNTVRVY), are a transit peptide targeting the chloroplast. The next 4 helical transmembrane spans lie at 72–92 (LFVG…EILT), 108–128 (GIEV…AAVL), 185–205 (LGFA…LAQF), and 217–237 (EFGL…EGSG).

It belongs to the ELIP/psbS family.

The protein resides in the plastid. Its subcellular location is the chloroplast thylakoid membrane. Functionally, required for non-photochemical quenching (NPQ), a mechanism that converts and dissipates the harmful excess absorbed light energy into heat and protect the photosynthetic apparatus from photo-oxidative damage. Seems involved in the activation of NPQ, possibly by promoting conformational changes required for activation of LHCSR3-dependent quenching in the antenna of photosystem II (PSII). The polypeptide is Photosystem II protein PSBS2 (Chlamydomonas reinhardtii (Chlamydomonas smithii)).